The sequence spans 230 residues: Orotidine 5'-phosphate decarboxylase (230 aa).

Substrate-binding positions include aspartate 10, lysine 31, 58–67, threonine 117, arginine 179, glutamine 188, glycine 208, and arginine 209; that span reads DLKLHDIPNT. The Proton donor role is filled by lysine 60.

This sequence belongs to the OMP decarboxylase family. Type 1 subfamily. Homodimer.

It catalyses the reaction orotidine 5'-phosphate + H(+) = UMP + CO2. It participates in pyrimidine metabolism; UMP biosynthesis via de novo pathway; UMP from orotate: step 2/2. Functionally, catalyzes the decarboxylation of orotidine 5'-monophosphate (OMP) to uridine 5'-monophosphate (UMP). The polypeptide is Orotidine 5'-phosphate decarboxylase (Staphylococcus epidermidis (strain ATCC 12228 / FDA PCI 1200)).